The primary structure comprises 207 residues: Ribosomal RNA small subunit methyltransferase G (207 aa).

Residues G76, Q81, 127 to 128 (VE), and R141 each bind S-adenosyl-L-methionine.

This sequence belongs to the methyltransferase superfamily. RNA methyltransferase RsmG family.

The protein localises to the cytoplasm. It catalyses the reaction guanosine(527) in 16S rRNA + S-adenosyl-L-methionine = N(7)-methylguanosine(527) in 16S rRNA + S-adenosyl-L-homocysteine. Functionally, specifically methylates the N7 position of guanine in position 527 of 16S rRNA. This Neisseria gonorrhoeae (strain ATCC 700825 / FA 1090) protein is Ribosomal RNA small subunit methyltransferase G.